A 299-amino-acid polypeptide reads, in one-letter code: Circadian clock oscillator protein KaiA (299 aa).

Residues 1-135 are psR domain, binds oxidized quinones; that stretch reads MQSPLSLCLF…LHLGPICTLP (135 aa). Residues 1–169 form the KaiA N-terminal domain; sequence MQSPLSLCLF…RLADKLKERL (169 aa). A flexible linker region spans residues 170-178; the sequence is GYLGVYYKR. One can recognise a KaiA C-terminal domain in the interval 179-287; it reads KPSHFYRNFS…GEMYRRSIPR (109 aa).

This sequence belongs to the KaiA family. In terms of assembly, homodimer. The KaiABC1 complex composition changes during the circadian cycle to control KaiC1 phosphorylation. Complexes KaiC1(6), KaiA(2-4):KaiC1(6), KaiB(6):KaiC1(6) and KaiC1(6):KaiB(6):KaiA(12) are among the most important forms, many form cooperatively. KaiA and CikA bind to the same region of the KaiB(fs) form and therefore compete. Interacts with KaiC1 but not KaiC2 or KaiC3. Interacts with itself, not seen to interact with other Kai proteins.

Key component of the KaiABC oscillator complex, which constitutes the main circadian regulator in cyanobacteria. Complex composition changes during the circadian cycle to control KaiC phosphorylation. KaiA stimulates KaiC autophosphorylation, while KaiB sequesters KaiA, leading to KaiC autodephosphorylation. KaiA binding to the KaiC CII domain during the subjective day yields KaiA(2-4):KaiC(6) complexes which stimulate KaiC autophosphorylation. Phospho-Ser-431 KaiC accumulation triggers binding of KaiB during the subjective night to form the KaiB(6):KaiC(6) complex, leading to changes in the output regulators CikA and SasA. KaiB(6):KaiC(6) formation exposes a site for KaiA binding on KaiB that sequesters KaiA from KaiC's CII domain, making the KaiC(6):KaiB(6):KaiA(12) complex resulting in KaiC autodephosphorylation. Complete dephosphorylation of KaiC leads to dissociation of KaiA(2):KaiB(1), completing 1 cycle of the Kai oscillator. Functionally, component of the oscillator and circadian clock in this organism, enhances fitness in a rhythmic environment. Stimulates KaiC1 to autophosphorylate, has no effect on the kinase activity of KaiC2 or KaiC3. In terms of biological role, binds oxidized quinones via the N-terminal PsR domain, allowing it to sense redox changes and possibly mediate clock input. This is Circadian clock oscillator protein KaiA from Synechocystis sp. (strain ATCC 27184 / PCC 6803 / Kazusa).